Here is a 129-residue protein sequence, read N- to C-terminus: Cytochrome c3 (129 aa).

Positions methionine 1–alanine 22 are cleaved as a signal peptide. Residues histidine 44, histidine 47, cysteine 52, cysteine 55, histidine 56, histidine 57, cysteine 68, cysteine 73, histidine 74, histidine 92, cysteine 101, cysteine 104, histidine 105, cysteine 122, cysteine 127, and histidine 128 each contribute to the heme c site.

In terms of processing, binds 4 heme c groups per subunit.

The protein resides in the periplasm. Its function is as follows. Participates in sulfate respiration coupled with phosphorylation by transferring electrons from the enzyme dehydrogenase to ferredoxin. The polypeptide is Cytochrome c3 (Nitratidesulfovibrio vulgaris (strain ATCC 29579 / DSM 644 / CCUG 34227 / NCIMB 8303 / VKM B-1760 / Hildenborough) (Desulfovibrio vulgaris)).